The chain runs to 142 residues: DNA-directed RNA polymerase subunit omega (142 aa).

The disordered stretch occupies residues A93–I142. The span at G100–E116 shows a compositional bias: acidic residues.

The protein belongs to the RNA polymerase subunit omega family. As to quaternary structure, the RNAP catalytic core consists of 2 alpha, 1 beta, 1 beta' and 1 omega subunit. When a sigma factor is associated with the core the holoenzyme is formed, which can initiate transcription.

It catalyses the reaction RNA(n) + a ribonucleoside 5'-triphosphate = RNA(n+1) + diphosphate. Promotes RNA polymerase assembly. Latches the N- and C-terminal regions of the beta' subunit thereby facilitating its interaction with the beta and alpha subunits. The polypeptide is DNA-directed RNA polymerase subunit omega (Rhodospirillum centenum (strain ATCC 51521 / SW)).